A 1124-amino-acid chain; its full sequence is Eukaryotic translation initiation factor 3 subunit A (1124 aa).

The stretch at 96-124 (LKMAEERTEQAQQQSSQATVDIDDLDNLA) forms a coiled coil. The PCI domain occupies 317 to 498 (IQRMTTHVLI…ECVHFGTDLS (182 aa)). 2 stretches are compositionally biased toward basic and acidic residues: residues 812 to 851 (EERR…RQLA) and 860 to 883 (EVER…ERRP). The segment at 812-1124 (EERRRIEEEL…EEGWTDVKHR (313 aa)) is disordered. A compositionally biased stretch (low complexity) spans 900–910 (PAAAAPANPAA). 4 stretches are compositionally biased toward basic and acidic residues: residues 928 to 952 (PRER…EKDG), 960 to 990 (RGGD…DRGP), 1007 to 1048 (PRRD…RGGG), and 1063 to 1100 (DDNR…EARP).

This sequence belongs to the eIF-3 subunit A family. As to quaternary structure, component of the eukaryotic translation initiation factor 3 (eIF-3) complex.

It is found in the cytoplasm. Its function is as follows. RNA-binding component of the eukaryotic translation initiation factor 3 (eIF-3) complex, which is involved in protein synthesis of a specialized repertoire of mRNAs and, together with other initiation factors, stimulates binding of mRNA and methionyl-tRNAi to the 40S ribosome. The eIF-3 complex specifically targets and initiates translation of a subset of mRNAs involved in cell proliferation. This is Eukaryotic translation initiation factor 3 subunit A from Anopheles gambiae (African malaria mosquito).